Here is a 246-residue protein sequence, read N- to C-terminus: ATP synthase subunit a, chloroplastic (246 aa).

5 helical membrane-spanning segments follow: residues 35–55 (GQVL…GLIA), 94–114 (VPFI…GALL), 132–152 (DINT…YAGI), 198–218 (LVVG…VMLL), and 219–239 (GVFT…AYIG).

It belongs to the ATPase A chain family. As to quaternary structure, F-type ATPases have 2 components, CF(1) - the catalytic core - and CF(0) - the membrane proton channel. CF(1) has five subunits: alpha(3), beta(3), gamma(1), delta(1), epsilon(1). CF(0) has four main subunits: a, b, b' and c.

It localises to the plastid. The protein resides in the chloroplast thylakoid membrane. Functionally, key component of the proton channel; it plays a direct role in the translocation of protons across the membrane. In Stigeoclonium helveticum (Green alga), this protein is ATP synthase subunit a, chloroplastic.